Consider the following 139-residue polypeptide: 6,7-dimethyl-8-ribityllumazine synthase (139 aa).

5-amino-6-(D-ribitylamino)uracil contacts are provided by residues phenylalanine 11, 42-44, and 66-68; these read ALE and VVI. 71 to 72 is a (2S)-2-hydroxy-3-oxobutyl phosphate binding site; that stretch reads ET. Histidine 74 functions as the Proton donor in the catalytic mechanism. Position 98 (asparagine 98) interacts with 5-amino-6-(D-ribitylamino)uracil. Residue arginine 112 coordinates (2S)-2-hydroxy-3-oxobutyl phosphate.

It belongs to the DMRL synthase family.

It carries out the reaction (2S)-2-hydroxy-3-oxobutyl phosphate + 5-amino-6-(D-ribitylamino)uracil = 6,7-dimethyl-8-(1-D-ribityl)lumazine + phosphate + 2 H2O + H(+). It functions in the pathway cofactor biosynthesis; riboflavin biosynthesis; riboflavin from 2-hydroxy-3-oxobutyl phosphate and 5-amino-6-(D-ribitylamino)uracil: step 1/2. Its function is as follows. Catalyzes the formation of 6,7-dimethyl-8-ribityllumazine by condensation of 5-amino-6-(D-ribitylamino)uracil with 3,4-dihydroxy-2-butanone 4-phosphate. This is the penultimate step in the biosynthesis of riboflavin. In Zymomonas mobilis subsp. mobilis (strain ATCC 31821 / ZM4 / CP4), this protein is 6,7-dimethyl-8-ribityllumazine synthase.